We begin with the raw amino-acid sequence, 364 residues long: Mannose-1-phosphate guanyltransferase (364 aa).

This sequence belongs to the transferase hexapeptide repeat family.

It localises to the cytoplasm. The catalysed reaction is alpha-D-mannose 1-phosphate + GTP + H(+) = GDP-alpha-D-mannose + diphosphate. The protein operates within nucleotide-sugar biosynthesis; GDP-alpha-D-mannose biosynthesis; GDP-alpha-D-mannose from alpha-D-mannose 1-phosphate (GTP route): step 1/1. Functionally, involved in cell wall synthesis where it is required for glycosylation. Involved in cell cycle progression through cell-size checkpoint. In Aspergillus fumigatus (strain ATCC MYA-4609 / CBS 101355 / FGSC A1100 / Af293) (Neosartorya fumigata), this protein is Mannose-1-phosphate guanyltransferase (mpg1).